The sequence spans 425 residues: Queuine tRNA-ribosyltransferase accessory subunit 2 (425 aa).

A disordered region spans residues 302–323 (QNGAQDLEKNSPEEDQEEEVVK). Residues Cys351, Cys353, Cys356, and His382 each contribute to the Zn(2+) site.

The protein belongs to the queuine tRNA-ribosyltransferase family. QTRT2 subfamily. As to quaternary structure, heterodimer of a catalytic subunit QTRT1 and an accessory subunit QTRT2. It depends on Zn(2+) as a cofactor.

Its subcellular location is the cytoplasm. The protein localises to the mitochondrion outer membrane. In terms of biological role, non-catalytic subunit of the queuine tRNA-ribosyltransferase (TGT) that catalyzes the base-exchange of a guanine (G) residue with queuine (Q) at position 34 (anticodon wobble position) in tRNAs with GU(N) anticodons (tRNA-Asp, -Asn, -His and -Tyr), resulting in the hypermodified nucleoside queuosine (7-(((4,5-cis-dihydroxy-2-cyclopenten-1-yl)amino)methyl)-7-deazaguanosine). This Gallus gallus (Chicken) protein is Queuine tRNA-ribosyltransferase accessory subunit 2.